The primary structure comprises 186 residues: RNA-free ribonuclease P (186 aa).

It belongs to the HARP family.

The enzyme catalyses Endonucleolytic cleavage of RNA, removing 5'-extranucleotides from tRNA precursor.. Functionally, RNA-free RNase P that catalyzes the removal of the 5'-leader sequence from pre-tRNA to produce the mature 5'-terminus. The chain is RNA-free ribonuclease P from Hydrogenobaculum sp. (strain Y04AAS1).